Here is a 69-residue protein sequence, read N- to C-terminus: Cytochrome b-c1 complex subunit 6 (69 aa).

2 disulfides stabilise this stretch: C17–C59 and C31–C45.

The protein belongs to the UQCRH/QCR6 family. As to quaternary structure, component of the ubiquinol-cytochrome c oxidoreductase (cytochrome b-c1 complex, complex III, CIII), a multisubunit enzyme composed of 3 respiratory subunits cytochrome b, cytochrome c1 and Rieske protein, 2 core protein subunits, and additional low-molecular weight protein subunits. The complex exists as an obligatory dimer and forms supercomplexes (SCs) in the inner mitochondrial membrane with cytochrome c oxidase (complex IV, CIV).

It is found in the mitochondrion inner membrane. Its function is as follows. Component of the ubiquinol-cytochrome c oxidoreductase, a multisubunit transmembrane complex that is part of the mitochondrial electron transport chain which drives oxidative phosphorylation. The respiratory chain contains 3 multisubunit complexes succinate dehydrogenase (complex II, CII), ubiquinol-cytochrome c oxidoreductase (cytochrome b-c1 complex, complex III, CIII) and cytochrome c oxidase (complex IV, CIV), that cooperate to transfer electrons derived from NADH and succinate to molecular oxygen, creating an electrochemical gradient over the inner membrane that drives transmembrane transport and the ATP synthase. The cytochrome b-c1 complex catalyzes electron transfer from ubiquinol to cytochrome c, linking this redox reaction to translocation of protons across the mitochondrial inner membrane, with protons being carried across the membrane as hydrogens on the quinol. In the process called Q cycle, 2 protons are consumed from the matrix, 4 protons are released into the intermembrane space and 2 electrons are passed to cytochrome c. This is Cytochrome b-c1 complex subunit 6 from Solanum tuberosum (Potato).